A 544-amino-acid polypeptide reads, in one-letter code: Phosphoenolpyruvate carboxykinase (ATP) (544 aa).

Residue 246 to 253 (GLSGTGKT) participates in ATP binding.

It belongs to the phosphoenolpyruvate carboxykinase (ATP) family.

The catalysed reaction is oxaloacetate + ATP = phosphoenolpyruvate + ADP + CO2. It participates in carbohydrate biosynthesis; gluconeogenesis. The chain is Phosphoenolpyruvate carboxykinase (ATP) (PCK1) from Candida glabrata (strain ATCC 2001 / BCRC 20586 / JCM 3761 / NBRC 0622 / NRRL Y-65 / CBS 138) (Yeast).